The chain runs to 307 residues: Ornithine carbamoyltransferase (307 aa).

Carbamoyl phosphate is bound by residues 50 to 53, Gln77, Arg101, and 128 to 131; these read STRT and HPCQ. L-ornithine-binding positions include Asn160, Asp224, and 228 to 229; that span reads SM. Carbamoyl phosphate is bound by residues 264–265 and Arg292; that span reads CL.

This sequence belongs to the aspartate/ornithine carbamoyltransferase superfamily. OTCase family.

It localises to the cytoplasm. The enzyme catalyses carbamoyl phosphate + L-ornithine = L-citrulline + phosphate + H(+). It functions in the pathway amino-acid biosynthesis; L-arginine biosynthesis; L-arginine from L-ornithine and carbamoyl phosphate: step 1/3. Functionally, reversibly catalyzes the transfer of the carbamoyl group from carbamoyl phosphate (CP) to the N(epsilon) atom of ornithine (ORN) to produce L-citrulline. This Clavibacter sepedonicus (Clavibacter michiganensis subsp. sepedonicus) protein is Ornithine carbamoyltransferase.